A 346-amino-acid polypeptide reads, in one-letter code: Protein RecA (346 aa).

ATP is bound at residue 67 to 74 (GPESSGKT).

This sequence belongs to the RecA family.

The protein localises to the cytoplasm. Its function is as follows. Can catalyze the hydrolysis of ATP in the presence of single-stranded DNA, the ATP-dependent uptake of single-stranded DNA by duplex DNA, and the ATP-dependent hybridization of homologous single-stranded DNAs. It interacts with LexA causing its activation and leading to its autocatalytic cleavage. This chain is Protein RecA, found in Mycobacterium ulcerans (strain Agy99).